Reading from the N-terminus, the 143-residue chain is Regulator of ribonuclease activity B (143 aa).

A compositionally biased stretch (acidic residues) spans 117-135 (DPDAEYDDEDGENEDDESE). The disordered stretch occupies residues 117 to 143 (DPDAEYDDEDGENEDDESESDKSSRLH).

The protein belongs to the RraB family. Interacts with the C-terminal region of Rne.

It localises to the cytoplasm. Functionally, globally modulates RNA abundance by binding to RNase E (Rne) and regulating its endonucleolytic activity. Can modulate Rne action in a substrate-dependent manner by altering the composition of the degradosome. This chain is Regulator of ribonuclease activity B, found in Proteus mirabilis (strain HI4320).